Reading from the N-terminus, the 168-residue chain is Putative apoptosis regulator A9 (168 aa).

Residues 143–162 form a helical membrane-spanning segment; sequence SAFYFLTAAASCLTLLLLYF.

Its subcellular location is the host membrane. Its function is as follows. Suppresses apoptosis in host cell and thus facilitates production of progeny virions. The sequence is that of Putative apoptosis regulator A9 (A9) from Alcelaphine herpesvirus 1 (strain C500) (AlHV-1).